The following is a 449-amino-acid chain: Allantoinase (449 aa).

6 residues coordinate Zn(2+): H61, H63, K148, H184, H240, and D313. N6-carboxylysine is present on K148.

The protein belongs to the metallo-dependent hydrolases superfamily. Allantoinase family. As to quaternary structure, homotetramer. Requires Zn(2+) as cofactor. Carboxylation allows a single lysine to coordinate two zinc ions.

It catalyses the reaction (S)-allantoin + H2O = allantoate + H(+). The protein operates within nitrogen metabolism; (S)-allantoin degradation; allantoate from (S)-allantoin: step 1/1. Functionally, catalyzes the conversion of allantoin (5-ureidohydantoin) to allantoic acid by hydrolytic cleavage of the five-member hydantoin ring. The chain is Allantoinase from Desulfitobacterium hafniense (strain DSM 10664 / DCB-2).